The following is a 1077-amino-acid chain: Carbamoyl phosphate synthase large chain (1077 aa).

Residues 1-403 (MPKRTDIQSI…SLHKALRGLE (403 aa)) are carboxyphosphate synthetic domain. Residues Arg129, Arg169, Gly175, Gly176, Glu208, Leu210, Glu215, Gly241, Ile242, His243, Gln285, and Glu299 each contribute to the ATP site. The region spanning 133-328 (DKAMKSIGLE…IAKIAAKLAV (196 aa)) is the ATP-grasp 1 domain. Positions 285, 299, and 301 each coordinate Mg(2+). Residues Gln285, Glu299, and Asn301 each contribute to the Mn(2+) site. The segment at 404-553 (VGATGFDEMV…YSSYDEECEA (150 aa)) is oligomerization domain. Residues 554 to 935 (NPTDKDKIMV…AYAKAELGCG (382 aa)) are carbamoyl phosphate synthetic domain. An ATP-grasp 2 domain is found at 678–869 (QAAVERLGLL…LAKIAARVMA (192 aa)). Residues Arg714, Arg753, Leu755, Glu760, Gly785, Val786, His787, Ser788, Gln828, and Glu840 each coordinate ATP. The Mg(2+) site is built by Gln828, Glu840, and Asn842. Positions 828, 840, and 842 each coordinate Mn(2+). An MGS-like domain is found at 936 to 1077 (SVYPEGGRAL…HAKVKASLEA (142 aa)). An allosteric domain region spans residues 936 to 1077 (SVYPEGGRAL…HAKVKASLEA (142 aa)).

This sequence belongs to the CarB family. Composed of two chains; the small (or glutamine) chain promotes the hydrolysis of glutamine to ammonia, which is used by the large (or ammonia) chain to synthesize carbamoyl phosphate. Tetramer of heterodimers (alpha,beta)4. Mg(2+) serves as cofactor. Requires Mn(2+) as cofactor.

The enzyme catalyses hydrogencarbonate + L-glutamine + 2 ATP + H2O = carbamoyl phosphate + L-glutamate + 2 ADP + phosphate + 2 H(+). The catalysed reaction is hydrogencarbonate + NH4(+) + 2 ATP = carbamoyl phosphate + 2 ADP + phosphate + 2 H(+). Its pathway is amino-acid biosynthesis; L-arginine biosynthesis; carbamoyl phosphate from bicarbonate: step 1/1. It participates in pyrimidine metabolism; UMP biosynthesis via de novo pathway; (S)-dihydroorotate from bicarbonate: step 1/3. Large subunit of the glutamine-dependent carbamoyl phosphate synthetase (CPSase). CPSase catalyzes the formation of carbamoyl phosphate from the ammonia moiety of glutamine, carbonate, and phosphate donated by ATP, constituting the first step of 2 biosynthetic pathways, one leading to arginine and/or urea and the other to pyrimidine nucleotides. The large subunit (synthetase) binds the substrates ammonia (free or transferred from glutamine from the small subunit), hydrogencarbonate and ATP and carries out an ATP-coupled ligase reaction, activating hydrogencarbonate by forming carboxy phosphate which reacts with ammonia to form carbamoyl phosphate. The chain is Carbamoyl phosphate synthase large chain from Vibrio parahaemolyticus serotype O3:K6 (strain RIMD 2210633).